The sequence spans 234 residues: Large ribosomal subunit protein uL1 (234 aa).

This sequence belongs to the universal ribosomal protein uL1 family. Part of the 50S ribosomal subunit.

Its function is as follows. Binds directly to 23S rRNA. The L1 stalk is quite mobile in the ribosome, and is involved in E site tRNA release. In terms of biological role, protein L1 is also a translational repressor protein, it controls the translation of the L11 operon by binding to its mRNA. This chain is Large ribosomal subunit protein uL1, found in Maridesulfovibrio salexigens (strain ATCC 14822 / DSM 2638 / NCIMB 8403 / VKM B-1763) (Desulfovibrio salexigens).